We begin with the raw amino-acid sequence, 295 residues long: Craniofacial development protein 1 (295 aa).

2 stretches are compositionally biased toward acidic residues: residues 1–18 and 25–43; these read MEEF…DEDY and YSED…DGEE. 2 disordered regions span residues 1-153 and 188-217; these read MEEF…LDKP and FLKQ…IKRA. A compositionally biased stretch (basic residues) spans 49 to 65; the sequence is KGKRRKAQGIPARKRKQ. Phosphoserine occurs at positions 80, 83, 84, and 112. Lys146 is covalently cross-linked (Glycyl lysine isopeptide (Lys-Gly) (interchain with G-Cter in SUMO2)). Positions 174–213 are hydrophilic; it reads VTKEVDAASKEAKSFLKQTEREKPQALVTSPATPLPAGSG. Basic and acidic residues predominate over residues 188–197; that stretch reads FLKQTEREKP. A Phosphoserine modification is found at Ser212. A BCNT-C domain is found at 214-295; that stretch reads IKRASGMSSL…RDLRLSKMKP (82 aa). Lys215 is modified (N6-methyllysine). At Ser246 the chain carries Phosphoserine.

In terms of tissue distribution, expressed in lung, liver and heart, with higher expression in teeth.

The protein resides in the chromosome. Its subcellular location is the centromere. The protein localises to the kinetochore. Its function is as follows. May play a role during embryogenesis. May modulate tooth organogenesis since alterations of this protein function affect tooth organs size as well as individual cell fate and survival. In embryonic cells, blockage of the function results in increased number of apoptotic cells, reduced proliferation, alterations in cell shape and fibronection matrix synthesis. The protein is Craniofacial development protein 1 (Cfdp1) of Mus musculus (Mouse).